The chain runs to 286 residues: MANLKEIRNRITSVSSTMQITSAMKMVSAAKLKKAQDAITAMRPYAEKLTELLQNLSATLEGEVGGAYTTQREVKKVLLVAITSNRGLCGAFNSNVIKEIKNRTDFYAGKQVDVFAIGKKGNDVLSKTHKVHGHHNAIFDHLTFENVAGIADNLTEKFLSGEYDKIELIYNQFKNAATQIVQTEQFLPLAPLKSEVSASAGDYIFEPSKEEIVLTLIPKSLKTQLYKGIRDSFASEHGARMTAMHKATDNATELRNQLKLTYNKARQAAITNEILEIVGGAEALNG.

This sequence belongs to the ATPase gamma chain family. In terms of assembly, F-type ATPases have 2 components, CF(1) - the catalytic core - and CF(0) - the membrane proton channel. CF(1) has five subunits: alpha(3), beta(3), gamma(1), delta(1), epsilon(1). CF(0) has three main subunits: a, b and c.

The protein resides in the cell inner membrane. In terms of biological role, produces ATP from ADP in the presence of a proton gradient across the membrane. The gamma chain is believed to be important in regulating ATPase activity and the flow of protons through the CF(0) complex. The sequence is that of ATP synthase gamma chain from Flavobacterium johnsoniae (strain ATCC 17061 / DSM 2064 / JCM 8514 / BCRC 14874 / CCUG 350202 / NBRC 14942 / NCIMB 11054 / UW101) (Cytophaga johnsonae).